Consider the following 383-residue polypeptide: Chorismate synthase (383 aa).

R39 and R45 together coordinate NADP(+). Residues R127–S129, Q249–S250, G294, K309–T313, and R335 each bind FMN.

Belongs to the chorismate synthase family. Homotetramer. FMNH2 serves as cofactor.

The catalysed reaction is 5-O-(1-carboxyvinyl)-3-phosphoshikimate = chorismate + phosphate. Its pathway is metabolic intermediate biosynthesis; chorismate biosynthesis; chorismate from D-erythrose 4-phosphate and phosphoenolpyruvate: step 7/7. In terms of biological role, catalyzes the anti-1,4-elimination of the C-3 phosphate and the C-6 proR hydrogen from 5-enolpyruvylshikimate-3-phosphate (EPSP) to yield chorismate, which is the branch point compound that serves as the starting substrate for the three terminal pathways of aromatic amino acid biosynthesis. This reaction introduces a second double bond into the aromatic ring system. The chain is Chorismate synthase from Caldicellulosiruptor bescii (strain ATCC BAA-1888 / DSM 6725 / KCTC 15123 / Z-1320) (Anaerocellum thermophilum).